The sequence spans 559 residues: Tectonic-like complex member MKS1 (559 aa).

Positions 311–439 (LRLFVNGEVV…TVSTWRPVEL (129 aa)) constitute a C2 B9-type domain.

Part of the tectonic-like complex (also named B9 complex). Interacts with TMEM107. Interacts with TCTN3, AHI1, TCTN1, TCTN2, CC2D2A. Interacts with FLNA. Interacts with TMEM67. Interacts with B9D1 and B9D2.

The protein resides in the cytoplasm. It is found in the cytoskeleton. The protein localises to the cilium basal body. It localises to the microtubule organizing center. Its subcellular location is the centrosome. Component of the tectonic-like complex, a complex localized at the transition zone of primary cilia and acting as a barrier that prevents diffusion of transmembrane proteins between the cilia and plasma membranes. Involved in centrosome migration to the apical cell surface during early ciliogenesis. Required for ciliary structure and function, including a role in regulating length and appropriate number through modulating centrosome duplication. Required for cell branching morphology. In Homo sapiens (Human), this protein is Tectonic-like complex member MKS1 (MKS1).